Reading from the N-terminus, the 520-residue chain is Peptide chain release factor 3 (520 aa).

One can recognise a tr-type G domain in the interval 8–277; it reads ESRKTFAIIS…FAPMPNARQT (270 aa). GTP-binding positions include 17-24, 85-89, and 139-142; these read SHPDAGKT, DTPGH, and NKLD.

This sequence belongs to the TRAFAC class translation factor GTPase superfamily. Classic translation factor GTPase family. PrfC subfamily.

It is found in the cytoplasm. Functionally, increases the formation of ribosomal termination complexes and stimulates activities of RF-1 and RF-2. It binds guanine nucleotides and has strong preference for UGA stop codons. It may interact directly with the ribosome. The stimulation of RF-1 and RF-2 is significantly reduced by GTP and GDP, but not by GMP. The polypeptide is Peptide chain release factor 3 (Staphylococcus aureus (strain USA300 / TCH1516)).